Consider the following 260-residue polypeptide: Flap endonuclease Xni (260 aa).

Asp-105 contacts Mg(2+). A 5'-3' exonuclease domain is found at 164–254 (SQFLDLLALA…LKDFRVNGPA (91 aa)). 5 residues coordinate K(+): Leu-172, Ala-173, Pro-181, Ile-183, and Ile-186. An interaction with DNA region spans residues 185-190 (GIGPKS).

This sequence belongs to the Xni family. The cofactor is Mg(2+). It depends on K(+) as a cofactor.

In terms of biological role, has flap endonuclease activity. During DNA replication, flap endonucleases cleave the 5'-overhanging flap structure that is generated by displacement synthesis when DNA polymerase encounters the 5'-end of a downstream Okazaki fragment. This is Flap endonuclease Xni from Shewanella sp. (strain ANA-3).